Reading from the N-terminus, the 314-residue chain is Aspartate carbamoyltransferase catalytic subunit (314 aa).

Carbamoyl phosphate-binding residues include R53 and T54. K82 contacts L-aspartate. R103, H131, and Q134 together coordinate carbamoyl phosphate. R164 and R230 together coordinate L-aspartate. Carbamoyl phosphate is bound by residues L267 and P268.

Belongs to the aspartate/ornithine carbamoyltransferase superfamily. ATCase family. As to quaternary structure, heterooligomer of catalytic and regulatory chains.

It carries out the reaction carbamoyl phosphate + L-aspartate = N-carbamoyl-L-aspartate + phosphate + H(+). Its pathway is pyrimidine metabolism; UMP biosynthesis via de novo pathway; (S)-dihydroorotate from bicarbonate: step 2/3. Catalyzes the condensation of carbamoyl phosphate and aspartate to form carbamoyl aspartate and inorganic phosphate, the committed step in the de novo pyrimidine nucleotide biosynthesis pathway. In Methanococcus aeolicus (strain ATCC BAA-1280 / DSM 17508 / OCM 812 / Nankai-3), this protein is Aspartate carbamoyltransferase catalytic subunit.